The chain runs to 213 residues: Imidazole glycerol phosphate synthase subunit HisH (213 aa).

The region spanning 1–212 (MLAILDYKAG…HRYCTEAADA (212 aa)) is the Glutamine amidotransferase type-1 domain. The Nucleophile role is filled by Cys79. Catalysis depends on residues His187 and Glu189.

Heterodimer of HisH and HisF.

The protein localises to the cytoplasm. The catalysed reaction is 5-[(5-phospho-1-deoxy-D-ribulos-1-ylimino)methylamino]-1-(5-phospho-beta-D-ribosyl)imidazole-4-carboxamide + L-glutamine = D-erythro-1-(imidazol-4-yl)glycerol 3-phosphate + 5-amino-1-(5-phospho-beta-D-ribosyl)imidazole-4-carboxamide + L-glutamate + H(+). It catalyses the reaction L-glutamine + H2O = L-glutamate + NH4(+). The protein operates within amino-acid biosynthesis; L-histidine biosynthesis; L-histidine from 5-phospho-alpha-D-ribose 1-diphosphate: step 5/9. Functionally, IGPS catalyzes the conversion of PRFAR and glutamine to IGP, AICAR and glutamate. The HisH subunit catalyzes the hydrolysis of glutamine to glutamate and ammonia as part of the synthesis of IGP and AICAR. The resulting ammonia molecule is channeled to the active site of HisF. This Nitratidesulfovibrio vulgaris (strain DP4) (Desulfovibrio vulgaris) protein is Imidazole glycerol phosphate synthase subunit HisH.